The chain runs to 624 residues: Matrilin-4 (624 aa).

The first 21 residues, 1-21, serve as a signal peptide directing secretion; that stretch reads MRGPCCWPLSLLLLFLQSWET. The region spanning 36 to 215 is the VWFA 1 domain; sequence DLVFMIDSSR…EFGLQFQGRL (180 aa). N-linked (GlcNAc...) asparagine glycosylation is present at asparagine 71. 4 EGF-like domains span residues 217-257, 258-298, 299-339, and 340-380; these read GKDL…KNCL, ALDL…RSCR, AIDY…RSCR, and VRDF…KSCD. 12 cysteine pairs are disulfide-bonded: cysteine 221-cysteine 232, cysteine 228-cysteine 241, cysteine 243-cysteine 256, cysteine 262-cysteine 273, cysteine 269-cysteine 282, cysteine 284-cysteine 297, cysteine 303-cysteine 314, cysteine 310-cysteine 323, cysteine 325-cysteine 338, cysteine 344-cysteine 355, cysteine 351-cysteine 364, and cysteine 366-cysteine 379. Asparagine 307 carries N-linked (GlcNAc...) asparagine glycosylation. In terms of domain architecture, VWFA 2 spans 388-563; it reads DLVLLVDGSK…STMTHLLENL (176 aa). A coiled-coil region spans residues 590-623; the sequence is EFQGRTLGALESLTQNLARLTERLEELENQLASR.

In terms of assembly, interacts with COMP. As to expression, lung, brain, sternum, kidney and heart.

Its subcellular location is the secreted. In terms of biological role, major component of the extracellular matrix of cartilage. The protein is Matrilin-4 (Matn4) of Mus musculus (Mouse).